Consider the following 179-residue polypeptide: Probable chorismate pyruvate-lyase (179 aa).

3 residues coordinate substrate: arginine 82, leucine 120, and glutamate 165.

This sequence belongs to the UbiC family.

The protein localises to the cytoplasm. The enzyme catalyses chorismate = 4-hydroxybenzoate + pyruvate. Its pathway is cofactor biosynthesis; ubiquinone biosynthesis. Its function is as follows. Removes the pyruvyl group from chorismate, with concomitant aromatization of the ring, to provide 4-hydroxybenzoate (4HB) for the ubiquinone pathway. In Vibrio parahaemolyticus serotype O3:K6 (strain RIMD 2210633), this protein is Probable chorismate pyruvate-lyase.